We begin with the raw amino-acid sequence, 458 residues long: tRNA modification GTPase MnmE (458 aa).

Residues Arg-30, Glu-90, and Lys-129 each coordinate (6S)-5-formyl-5,6,7,8-tetrahydrofolate. The TrmE-type G domain maps to 225–379 (GLSICLIGCP…LHQTIDTIIW (155 aa)). Residue Asn-235 participates in K(+) binding. Residues 235–240 (NVGKSS), 254–260 (SPIPGTT), and 279–282 (DTAG) each bind GTP. Ser-239 contributes to the Mg(2+) binding site. K(+) contacts are provided by Ser-254, Ile-256, and Thr-259. Thr-260 provides a ligand contact to Mg(2+). Residue Lys-458 coordinates (6S)-5-formyl-5,6,7,8-tetrahydrofolate.

This sequence belongs to the TRAFAC class TrmE-Era-EngA-EngB-Septin-like GTPase superfamily. TrmE GTPase family. Homodimer. Heterotetramer of two MnmE and two MnmG subunits. The cofactor is K(+).

Its subcellular location is the cytoplasm. Its function is as follows. Exhibits a very high intrinsic GTPase hydrolysis rate. Involved in the addition of a carboxymethylaminomethyl (cmnm) group at the wobble position (U34) of certain tRNAs, forming tRNA-cmnm(5)s(2)U34. The sequence is that of tRNA modification GTPase MnmE from Protochlamydia amoebophila (strain UWE25).